We begin with the raw amino-acid sequence, 492 residues long: Diacylglycerol kinase 7 (492 aa).

The 159-residue stretch at 90–248 folds into the DAGKc domain; sequence APHAPMVVFI…SWKIVVSMPS (159 aa).

The protein belongs to the eukaryotic diacylglycerol kinase family. As to quaternary structure, monomer. As to expression, highly expressed in flowers, and at low levels in roots, stems and leaves.

The catalysed reaction is a 1,2-diacyl-sn-glycerol + ATP = a 1,2-diacyl-sn-glycero-3-phosphate + ADP + H(+). Its function is as follows. Phosphorylates the second messenger diacylglycerol (DAG) to generate phosphatidic acid (PA), another important signaling molecule. PA is required for plant development and responses to abiotic stress and pathogen attack. May be involved in the accumulation of PA during cold stress xhibits high specificity for 1,2-dioleoyl-sn-glycerol (1,2-DOG), 1-palmitoyl, 2-oleoyl-sn-glycerol (1,2 POG), 1-stearoyl, 2-linoleoyl-sn-glycerol (1,2-SLG) and 1-oleoyl, 2-palmitoyl-sn-glycerol (1,2-OPG). In Arabidopsis thaliana (Mouse-ear cress), this protein is Diacylglycerol kinase 7 (DGK7).